We begin with the raw amino-acid sequence, 122 residues long: MKLGIFFSVFFLAMIHSCLSETNEDKNLESYFREDDLKALSFGEYARAMMAESRKDNCIPKHHECTSRPKDCCKQNLMQFKCSCMTIIDKNNKETERCKCDNSIFQKVAKTSVNIGKAVVTK.

The first 20 residues, M1–S20, serve as a signal peptide directing secretion. A propeptide spanning residues E21–R47 is cleaved from the precursor. 4 disulfides stabilise this stretch: C58/C73, C65/C82, C72/C100, and C84/C98.

Belongs to the neurotoxin 19 (CSTX) family. As to expression, expressed by the venom gland.

The protein localises to the secreted. It is found in the target cell membrane. Functionally, potent antibacterial peptide with anti-inflammatory properties. Inhibits both Gram-negative and Gram-positive bacteria by disrupting both the outer membrane and the cytosolic membrane of bacteria. Also downregulates the expression of pro-inflammatory mediators (cyclooxygenase-2 (PTGS2/COX2), nitric oxide-induced synthase (NOS2), IL-1 beta (IL1B), TNF-alpha (TNF)) and upregulates the level of anti-inflammatory cytokine (IL10) by inactivating mitogen-activated protein kinase signaling in a lipopolysaccharide-stimulated murine macrophage cell line. The chain is Lycotoxin-Pa4a from Pardosa astrigera (Wolf spider).